Consider the following 110-residue polypeptide: U1-lycotoxin-Ls1mm (110 aa).

The N-terminal stretch at 1 to 20 (MKFVLLFGVLLVTLFSYSSA) is a signal peptide. Positions 21–44 (EMLDDFDQADEDELLSLIEKEEAR) are excised as a propeptide. 4 disulfides stabilise this stretch: Cys47-Cys62, Cys54-Cys71, Cys61-Cys89, and Cys73-Cys87.

This sequence belongs to the neurotoxin 19 (CSTX) family. 03 subfamily. In terms of tissue distribution, expressed by the venom gland.

The protein localises to the secreted. The chain is U1-lycotoxin-Ls1mm from Lycosa singoriensis (Wolf spider).